We begin with the raw amino-acid sequence, 327 residues long: Biotin synthase (327 aa).

Residues 49-282 form the Radical SAM core domain; that stretch reads FNKDKIDLCS…NKVIRLCGGR (234 aa). Residues Cys67, Cys71, and Cys74 each coordinate [4Fe-4S] cluster. [2Fe-2S] cluster-binding residues include Ser110, Cys142, Cys201, and Arg277.

This sequence belongs to the radical SAM superfamily. Biotin synthase family. In terms of assembly, homodimer. It depends on [4Fe-4S] cluster as a cofactor. The cofactor is [2Fe-2S] cluster.

The catalysed reaction is (4R,5S)-dethiobiotin + (sulfur carrier)-SH + 2 reduced [2Fe-2S]-[ferredoxin] + 2 S-adenosyl-L-methionine = (sulfur carrier)-H + biotin + 2 5'-deoxyadenosine + 2 L-methionine + 2 oxidized [2Fe-2S]-[ferredoxin]. Its pathway is cofactor biosynthesis; biotin biosynthesis; biotin from 7,8-diaminononanoate: step 2/2. Functionally, catalyzes the conversion of dethiobiotin (DTB) to biotin by the insertion of a sulfur atom into dethiobiotin via a radical-based mechanism. The polypeptide is Biotin synthase (Methanococcus maripaludis (strain C5 / ATCC BAA-1333)).